A 158-amino-acid polypeptide reads, in one-letter code: MLTFTERLPPRHTASSPPPETVLFSLLLTAEERTRSRYRLDSPEGFSLCFRLPRGTILQDRDFLRGENGEIIQIIAKPEPVITITAPSTDLLLKAAYHLGNRHVALEINPDYLRLAPDSVLQAMLEGLGLAVNEEIAPFNPEIGAYQHYHDLEEAKKG.

Belongs to the UreE family.

The protein resides in the cytoplasm. Involved in urease metallocenter assembly. Binds nickel. Probably functions as a nickel donor during metallocenter assembly. The protein is Urease accessory protein UreE of Microcystis aeruginosa (strain NIES-843 / IAM M-2473).